Reading from the N-terminus, the 214-residue chain is Redox-sensing transcriptional repressor Rex (214 aa).

Positions 17–56 (LYYRIFKRFHADQVEKASSKQIADAMGIDSATVRRDFSYF) form a DNA-binding region, H-T-H motif. An NAD(+)-binding site is contributed by 91 to 96 (GCGNIG).

Belongs to the transcriptional regulatory Rex family. Homodimer.

It localises to the cytoplasm. Functionally, modulates transcription in response to changes in cellular NADH/NAD(+) redox state. This Streptococcus pyogenes serotype M4 (strain MGAS10750) protein is Redox-sensing transcriptional repressor Rex.